A 129-amino-acid chain; its full sequence is Small ribosomal subunit protein uS11 (129 aa).

Belongs to the universal ribosomal protein uS11 family. In terms of assembly, part of the 30S ribosomal subunit. Interacts with proteins S7 and S18. Binds to IF-3.

Its function is as follows. Located on the platform of the 30S subunit, it bridges several disparate RNA helices of the 16S rRNA. Forms part of the Shine-Dalgarno cleft in the 70S ribosome. This chain is Small ribosomal subunit protein uS11, found in Bartonella tribocorum (strain CIP 105476 / IBS 506).